A 545-amino-acid chain; its full sequence is EH domain-containing protein 1 (545 aa).

2 consecutive EF-hand domains span residues 14 to 49 (ENQMIYKEWFEFSDSDGDGRITGNDAIKFFTMSNLP) and 50 to 83 (RPELKQIWAIADSKRQGYLGFKEFIVAMQLVSLA). In terms of domain architecture, EH spans 15–93 (NQMIYKEWFE…QTGHEISHEV (79 aa)). Ca(2+) contacts are provided by aspartate 27, aspartate 29, aspartate 31, arginine 33, aspartate 38, aspartate 61, tyrosine 67, and glutamate 72. One can recognise a Dynamin-type G domain in the interval 194 to 429 (FDAKPMVMLL…DLLADLKDIP (236 aa)). The interval 204-211 (GQYSTGKT) is G1 motif. 204-211 (GQYSTGKT) contacts GTP. A G2 motif region spans residues 230–231 (EP). The segment at 292-295 (DTPG) is G3 motif. GTP contacts are provided by residues 309–313 (DFTGV) and lysine 359. Residues 358 to 361 (NKAD) form a G4 motif region. Position 382 (valine 382) is a region of interest, G5 motif. Residue 395-398 (SFSD) coordinates GTP. Residues 467 to 490 (KAKAQQKLIDNLEDEFGKVQREHH) adopt a coiled-coil conformation.

Belongs to the TRAFAC class dynamin-like GTPase superfamily. Dynamin/Fzo/YdjA family. EHD subfamily. In terms of assembly, homooligomer, and heterooligomer with EHD2.

The protein resides in the endosome membrane. Its subcellular location is the cell membrane. It is found in the cytoplasm. The catalysed reaction is GTP + H2O = GDP + phosphate + H(+). In terms of biological role, involved in endocytosis positive regulation. Acts in early endocytic membrane fusion and membrane trafficking of recycling endosomes. Confers salt tolerance. The sequence is that of EH domain-containing protein 1 from Arabidopsis thaliana (Mouse-ear cress).